The following is a 111-amino-acid chain: Probable 4-amino-4-deoxy-L-arabinose-phosphoundecaprenol flippase subunit ArnE (111 aa).

3 helical membrane passes run 39–59 (WLAISLLLLGGAMLVWLWVLQ), 61–81 (VPVGIAYPMFSLNFVLVTLAA), and 89–109 (VSLRHGCGLLLIVAGVMCMGV). The 70-residue stretch at 40 to 109 (LAISLLLLGG…IVAGVMCMGV (70 aa)) folds into the EamA domain.

It belongs to the ArnE family. As to quaternary structure, heterodimer of ArnE and ArnF.

It localises to the cell inner membrane. Its pathway is bacterial outer membrane biogenesis; lipopolysaccharide biosynthesis. Functionally, translocates 4-amino-4-deoxy-L-arabinose-phosphoundecaprenol (alpha-L-Ara4N-phosphoundecaprenol) from the cytoplasmic to the periplasmic side of the inner membrane. This chain is Probable 4-amino-4-deoxy-L-arabinose-phosphoundecaprenol flippase subunit ArnE, found in Sodalis glossinidius (strain morsitans).